The primary structure comprises 303 residues: 4-diphosphocytidyl-2-C-methyl-D-erythritol kinase (303 aa).

Residue K18 is part of the active site. 111–121 (PVASGIGGGSA) is a binding site for ATP. D153 is a catalytic residue.

The protein belongs to the GHMP kinase family. IspE subfamily.

It catalyses the reaction 4-CDP-2-C-methyl-D-erythritol + ATP = 4-CDP-2-C-methyl-D-erythritol 2-phosphate + ADP + H(+). The protein operates within isoprenoid biosynthesis; isopentenyl diphosphate biosynthesis via DXP pathway; isopentenyl diphosphate from 1-deoxy-D-xylulose 5-phosphate: step 3/6. Its function is as follows. Catalyzes the phosphorylation of the position 2 hydroxy group of 4-diphosphocytidyl-2C-methyl-D-erythritol. The polypeptide is 4-diphosphocytidyl-2-C-methyl-D-erythritol kinase (Sinorhizobium medicae (strain WSM419) (Ensifer medicae)).